The chain runs to 276 residues: Putative pyruvate, phosphate dikinase regulatory protein 1 (276 aa).

150–157 contacts ADP; sequence GLPRTSKT.

It belongs to the pyruvate, phosphate/water dikinase regulatory protein family. PDRP subfamily.

It catalyses the reaction N(tele)-phospho-L-histidyl/L-threonyl-[pyruvate, phosphate dikinase] + ADP = N(tele)-phospho-L-histidyl/O-phospho-L-threonyl-[pyruvate, phosphate dikinase] + AMP + H(+). It carries out the reaction N(tele)-phospho-L-histidyl/O-phospho-L-threonyl-[pyruvate, phosphate dikinase] + phosphate + H(+) = N(tele)-phospho-L-histidyl/L-threonyl-[pyruvate, phosphate dikinase] + diphosphate. In terms of biological role, bifunctional serine/threonine kinase and phosphorylase involved in the regulation of the pyruvate, phosphate dikinase (PPDK) by catalyzing its phosphorylation/dephosphorylation. This Syntrophomonas wolfei subsp. wolfei (strain DSM 2245B / Goettingen) protein is Putative pyruvate, phosphate dikinase regulatory protein 1.